The chain runs to 309 residues: tRNA dimethylallyltransferase (309 aa).

An ATP-binding site is contributed by 15-22; sequence GPTASGKS. 17-22 lines the substrate pocket; that stretch reads TASGKS. Residues 40–43 are interaction with substrate tRNA; sequence DSRQ.

This sequence belongs to the IPP transferase family. As to quaternary structure, monomer. It depends on Mg(2+) as a cofactor.

It catalyses the reaction adenosine(37) in tRNA + dimethylallyl diphosphate = N(6)-dimethylallyladenosine(37) in tRNA + diphosphate. Its function is as follows. Catalyzes the transfer of a dimethylallyl group onto the adenine at position 37 in tRNAs that read codons beginning with uridine, leading to the formation of N6-(dimethylallyl)adenosine (i(6)A). This is tRNA dimethylallyltransferase from Chlorobium phaeovibrioides (strain DSM 265 / 1930) (Prosthecochloris vibrioformis (strain DSM 265)).